We begin with the raw amino-acid sequence, 508 residues long: Carboxypeptidase Y homolog ARB_05721 (508 aa).

The first 25 residues, 1–25, serve as a signal peptide directing secretion; sequence MELYLNMLSFWYILLATSFFGPSQA. 2 N-linked (GlcNAc...) asparagine glycosylation sites follow: N132 and N169. Residue S204 is part of the active site. N268 is a glycosylation site (N-linked (GlcNAc...) asparagine). 3 cysteine pairs are disulfide-bonded: C282-C305, C289-C298, and C332-C338. Residue D410 is part of the active site. C413 contributes to the substrate binding site. N451 carries N-linked (GlcNAc...) asparagine glycosylation. H484 is a catalytic residue. Position 485 (M485) interacts with substrate.

It belongs to the peptidase S10 family.

It localises to the secreted. The enzyme catalyses Release of a C-terminal amino acid with broad specificity.. In terms of biological role, involved in degradation of small peptides. This Arthroderma benhamiae (strain ATCC MYA-4681 / CBS 112371) (Trichophyton mentagrophytes) protein is Carboxypeptidase Y homolog ARB_05721.